The chain runs to 243 residues: Thaumatin-like protein 1 (243 aa).

Positions 1 to 22 are cleaved as a signal peptide; sequence MMKTLALYGLTLALFFLSGAHS. Disulfide bonds link C31–C242, C79–C88, C93–C100, C148–C231, C153–C214, C161–C177, C181–C190, and C191–C201.

Belongs to the thaumatin family.

It is found in the secreted. Its subcellular location is the extracellular space. The protein resides in the apoplast. Functionally, possesses antifungal activity. The polypeptide is Thaumatin-like protein 1 (TL1) (Castanea sativa (Sweet chestnut)).